Here is a 120-residue protein sequence, read N- to C-terminus: NAD(P)H-quinone oxidoreductase subunit 3 (120 aa).

Transmembrane regions (helical) follow at residues 1 to 21, 64 to 84, and 89 to 109; these read MFVL…SLVP, MFAL…PWAV, and LGLL…VALV.

Belongs to the complex I subunit 3 family. In terms of assembly, NDH-1 can be composed of about 15 different subunits; different subcomplexes with different compositions have been identified which probably have different functions.

The protein resides in the cellular thylakoid membrane. The catalysed reaction is a plastoquinone + NADH + (n+1) H(+)(in) = a plastoquinol + NAD(+) + n H(+)(out). It carries out the reaction a plastoquinone + NADPH + (n+1) H(+)(in) = a plastoquinol + NADP(+) + n H(+)(out). Its function is as follows. NDH-1 shuttles electrons from an unknown electron donor, via FMN and iron-sulfur (Fe-S) centers, to quinones in the respiratory and/or the photosynthetic chain. The immediate electron acceptor for the enzyme in this species is believed to be plastoquinone. Couples the redox reaction to proton translocation, and thus conserves the redox energy in a proton gradient. Cyanobacterial NDH-1 also plays a role in inorganic carbon-concentration. This Trichormus variabilis (strain ATCC 29413 / PCC 7937) (Anabaena variabilis) protein is NAD(P)H-quinone oxidoreductase subunit 3.